Here is a 306-residue protein sequence, read N- to C-terminus: ATP-dependent (S)-NAD(P)H-hydrate dehydratase (306 aa).

The YjeF C-terminal domain occupies 4–300; it reads LIDLFKPMIP…NQISNGFEDL (297 aa). (6S)-NADPHX-binding positions include Gly-104 and 157–163; that span reads NFVEFKS. ATP is bound by residues 197-201 and 216-225; these read KGKED and GMPRRCGGQG. (6S)-NADPHX is bound at residue Asp-226.

The protein belongs to the NnrD/CARKD family. Mg(2+) serves as cofactor.

It catalyses the reaction (6S)-NADHX + ATP = ADP + phosphate + NADH + H(+). The enzyme catalyses (6S)-NADPHX + ATP = ADP + phosphate + NADPH + H(+). In terms of biological role, catalyzes the dehydration of the S-form of NAD(P)HX at the expense of ATP, which is converted to ADP. Together with NAD(P)HX epimerase, which catalyzes the epimerization of the S- and R-forms, the enzyme allows the repair of both epimers of NAD(P)HX, a damaged form of NAD(P)H that is a result of enzymatic or heat-dependent hydration. This chain is ATP-dependent (S)-NAD(P)H-hydrate dehydratase, found in Dictyostelium discoideum (Social amoeba).